The following is a 359-amino-acid chain: Phospho-N-acetylmuramoyl-pentapeptide-transferase (359 aa).

A run of 10 helical transmembrane segments spans residues 3-23, 55-75, 84-104, 120-140, 156-176, 187-207, 231-251, 255-275, 280-300, and 334-354; these read QILI…PVLI, VAIL…GLAL, GLLV…DDLI, TVGI…FGNA, IATV…LVSA, LDGL…LITF, LALV…WNAA, IFMG…LSVT, ILAV…VVQI, and FWLL…GEWL.

The protein belongs to the glycosyltransferase 4 family. MraY subfamily. The cofactor is Mg(2+).

It is found in the cell membrane. The enzyme catalyses UDP-N-acetyl-alpha-D-muramoyl-L-alanyl-gamma-D-glutamyl-meso-2,6-diaminopimeloyl-D-alanyl-D-alanine + di-trans,octa-cis-undecaprenyl phosphate = di-trans,octa-cis-undecaprenyl diphospho-N-acetyl-alpha-D-muramoyl-L-alanyl-D-glutamyl-meso-2,6-diaminopimeloyl-D-alanyl-D-alanine + UMP. It functions in the pathway cell wall biogenesis; peptidoglycan biosynthesis. Its function is as follows. Catalyzes the initial step of the lipid cycle reactions in the biosynthesis of the cell wall peptidoglycan: transfers peptidoglycan precursor phospho-MurNAc-pentapeptide from UDP-MurNAc-pentapeptide onto the lipid carrier undecaprenyl phosphate, yielding undecaprenyl-pyrophosphoryl-MurNAc-pentapeptide, known as lipid I. This chain is Phospho-N-acetylmuramoyl-pentapeptide-transferase, found in Mycobacterium sp. (strain MCS).